The chain runs to 521 residues: Cell cycle checkpoint protein hpr-9 (521 aa).

Disordered stretches follow at residues 1-20 (MQAIHENYTDNPSSSITRER), 318-375 (QHEE…NRFV), and 492-521 (GTETTSKMRMSQQFDKRLGPLVSDTQYESR). Polar residues-rich tracts occupy residues 355 to 370 (ESLSQEETTRSQSLPS) and 493 to 504 (TETTSKMRMSQQ).

This sequence belongs to the rad9 family. As to quaternary structure, putative component of the toroidal 9-1-1 (RAD9-RAD1-HUS1) complex, composed of hpr-9, mrt-2 and hus-1.

Functionally, may be a component of the 9-1-1 cell-cycle checkpoint response complex that plays a major role in DNA repair. This Caenorhabditis elegans protein is Cell cycle checkpoint protein hpr-9.